The following is a 261-amino-acid chain: Carnitinyl-CoA dehydratase (261 aa).

The active-site Nucleophile is the E111. E131 acts as the Proton acceptor in catalysis.

It belongs to the enoyl-CoA hydratase/isomerase family.

The catalysed reaction is (R)-carnitinyl-CoA = crotonobetainyl-CoA + H2O. The protein operates within amine and polyamine metabolism; carnitine metabolism. Functionally, catalyzes the reversible dehydration of L-carnitinyl-CoA to crotonobetainyl-CoA. This Proteus mirabilis (strain HI4320) protein is Carnitinyl-CoA dehydratase.